Consider the following 574-residue polypeptide: Amino-acid acetyltransferase, mitochondrial (574 aa).

The N-terminal 13 residues, 1-13, are a transit peptide targeting the mitochondrion; that stretch reads MWRRIFAHELKYD. Residues 392–560 enclose the N-acetyltransferase domain; that stretch reads KGAKPSSNSP…KRLREFMRSV (169 aa).

Belongs to the acetyltransferase family. In terms of assembly, interacts with the acetylglutamate kinase chain of AGR5,6.

The protein resides in the mitochondrion. It carries out the reaction L-glutamate + acetyl-CoA = N-acetyl-L-glutamate + CoA + H(+). It participates in amino-acid biosynthesis; L-arginine biosynthesis; N(2)-acetyl-L-ornithine from L-glutamate: step 1/4. Its activity is regulated as follows. Feedback inhibition by L-arginine. Its function is as follows. N-acetylglutamate synthase involved in arginine biosynthesis. The protein is Amino-acid acetyltransferase, mitochondrial (ARG2) of Saccharomyces cerevisiae (strain RM11-1a) (Baker's yeast).